The sequence spans 284 residues: Bifunctional protein FolD (284 aa).

Residues 166 to 168 (GAS) and isoleucine 232 each bind NADP(+).

This sequence belongs to the tetrahydrofolate dehydrogenase/cyclohydrolase family. In terms of assembly, homodimer.

The enzyme catalyses (6R)-5,10-methylene-5,6,7,8-tetrahydrofolate + NADP(+) = (6R)-5,10-methenyltetrahydrofolate + NADPH. It carries out the reaction (6R)-5,10-methenyltetrahydrofolate + H2O = (6R)-10-formyltetrahydrofolate + H(+). Its pathway is one-carbon metabolism; tetrahydrofolate interconversion. Its function is as follows. Catalyzes the oxidation of 5,10-methylenetetrahydrofolate to 5,10-methenyltetrahydrofolate and then the hydrolysis of 5,10-methenyltetrahydrofolate to 10-formyltetrahydrofolate. The polypeptide is Bifunctional protein FolD (Shewanella sp. (strain ANA-3)).